Consider the following 210-residue polypeptide: Glycerol-3-phosphate acyltransferase 2 (210 aa).

A run of 6 helical transmembrane segments spans residues 4 to 24 (LIMVIIALIAAYFIGSTPAPY), 54 to 74 (FWPGILVLAVDIGKGALAMAV), 82 to 102 (LGIQMLCALMAIAGHNYPVWL), 114 to 134 (IGILAYLMPEGIPIYIACFLV), 141 to 161 (FPTLSYGISFLSFILVAWLGQ), and 163 to 183 (DLGKVLFSLLVVMIPIIMYIP).

The protein belongs to the PlsY family. As to quaternary structure, probably interacts with PlsX.

The protein resides in the cell membrane. It carries out the reaction an acyl phosphate + sn-glycerol 3-phosphate = a 1-acyl-sn-glycero-3-phosphate + phosphate. The protein operates within lipid metabolism; phospholipid metabolism. Catalyzes the transfer of an acyl group from acyl-phosphate (acyl-PO(4)) to glycerol-3-phosphate (G3P) to form lysophosphatidic acid (LPA). This enzyme utilizes acyl-phosphate as fatty acyl donor, but not acyl-CoA or acyl-ACP. In Dehalococcoides mccartyi (strain ATCC BAA-2266 / KCTC 15142 / 195) (Dehalococcoides ethenogenes (strain 195)), this protein is Glycerol-3-phosphate acyltransferase 2.